The primary structure comprises 498 residues: ATP synthase subunit beta, chloroplastic (498 aa).

Residue 172-179 (GGAGVGKT) participates in ATP binding.

This sequence belongs to the ATPase alpha/beta chains family. F-type ATPases have 2 components, CF(1) - the catalytic core - and CF(0) - the membrane proton channel. CF(1) has five subunits: alpha(3), beta(3), gamma(1), delta(1), epsilon(1). CF(0) has four main subunits: a(1), b(1), b'(1) and c(9-12).

The protein localises to the plastid. Its subcellular location is the chloroplast thylakoid membrane. It catalyses the reaction ATP + H2O + 4 H(+)(in) = ADP + phosphate + 5 H(+)(out). In terms of biological role, produces ATP from ADP in the presence of a proton gradient across the membrane. The catalytic sites are hosted primarily by the beta subunits. The polypeptide is ATP synthase subunit beta, chloroplastic (Populus tremuloides (Quaking aspen)).